The sequence spans 227 residues: Nucleoside triphosphate pyrophosphatase (227 aa).

The Proton acceptor role is filled by Asp-77.

Belongs to the Maf family. It depends on a divalent metal cation as a cofactor.

It is found in the cytoplasm. The catalysed reaction is a ribonucleoside 5'-triphosphate + H2O = a ribonucleoside 5'-phosphate + diphosphate + H(+). The enzyme catalyses a 2'-deoxyribonucleoside 5'-triphosphate + H2O = a 2'-deoxyribonucleoside 5'-phosphate + diphosphate + H(+). Functionally, nucleoside triphosphate pyrophosphatase. May have a dual role in cell division arrest and in preventing the incorporation of modified nucleotides into cellular nucleic acids. This chain is Nucleoside triphosphate pyrophosphatase, found in Rickettsia typhi (strain ATCC VR-144 / Wilmington).